Here is a 501-residue protein sequence, read N- to C-terminus: MDTVRVRFAPSPTGSLHIGGARTALFNWLFARHHGGAFILRLEDTDTGRNIDEAAAQIVSSLRWLGIDWDEGYDRGGPFGPYRQSERFELYREEARRLLANGDAYWCYCTPEDLAAQREEARQRGEVPRYDGRCRQLTDDARREKEAAGIRPALRVKMPKTGTTVVKDRIRGEIGFDNATLDDIIVMKSNGGPTYNFACVVDDGAMRISHVIRAEEHLSNTPKQIVLFNLLGYALPEFVHVPMILAPDRSKLSKRHGATAVDEFRADGFLPEALINYLALLGWSPGSEQEQFTVEELVASFSLDAVSKHAAIYDVKKLTWLNAQYLNSLPQARVVEAVRPFMQEAGYLSATPNPAELDYLSRVVEAVRSRVHTLAELRDASAYFYRSDFEYDDKGVRKHFTKPGVTNILARGRDALSRLPAGRFTVEGTEEAFRQVIEELGVSGGTLIHPTRLALSGRTVGPGLFDIIAVLGKEECLLRLDRAIAWIGANVNNANRTDACS.

The 'HIGH' region motif lies at 10–20; sequence PSPTGSLHIGG. The 'KMSKS' region signature appears at 251 to 255; sequence KLSKR. Position 254 (K254) interacts with ATP.

Belongs to the class-I aminoacyl-tRNA synthetase family. Glutamate--tRNA ligase type 1 subfamily. Monomer.

The protein localises to the cytoplasm. It carries out the reaction tRNA(Glu) + L-glutamate + ATP = L-glutamyl-tRNA(Glu) + AMP + diphosphate. Its function is as follows. Catalyzes the attachment of glutamate to tRNA(Glu) in a two-step reaction: glutamate is first activated by ATP to form Glu-AMP and then transferred to the acceptor end of tRNA(Glu). This Desulforudis audaxviator (strain MP104C) protein is Glutamate--tRNA ligase.